The primary structure comprises 372 residues: E3 ubiquitin-protein ligase RNF34 (372 aa).

The FYVE-type zinc-finger motif lies at 56 to 107 (EGPNIVCKACGLSFSVFRKKHVCCDCKKDFCSVCSVLQENLRRCSTCHLLQE). The 20-residue stretch at 115–134 (LMRLKVKDLRQYLILRNIPT) folds into the SAP 1 domain. Serine 169 carries the post-translational modification Phosphoserine. Residues 194–252 (QGELMDGDQTSRSGVPAQVQSEITSANTEDDDDDDDEDDDDEEENAEDQNPGLSKERVR) form a disordered region. Over residues 201–220 (DQTSRSGVPAQVQSEITSAN) the composition is skewed to polar residues. The span at 221 to 240 (TEDDDDDDDEDDDDEEENAE) shows a compositional bias: acidic residues. A phosphoserine mark is found at serine 254 and serine 256. Positions 264-278 (VEGMSVRQLKEILAR) constitute an SAP 2 domain. The RING-type zinc-finger motif lies at 325–360 (CRICMDAVIDCVLLECGHMVTCTKCGKRMSECPICR).

Interacts with CASP8 and CASP10. Interacts with p53/TP53; involved in p53/TP53 ubiquitination. Interacts (via RING-type zinc finger) with MDM2; the interaction stabilizes MDM2. Interacts (via RING-type zinc finger) with PPARGC1A. Interacts with NOD1. Post-translationally, autoubiquitinated (in vitro). In terms of processing, proteolytically cleaved by caspases upon induction of apoptosis by TNF.

The protein resides in the cell membrane. It localises to the endomembrane system. It is found in the nucleus. Its subcellular location is the nucleus speckle. The protein localises to the cytoplasm. The protein resides in the cytosol. It catalyses the reaction S-ubiquitinyl-[E2 ubiquitin-conjugating enzyme]-L-cysteine + [acceptor protein]-L-lysine = [E2 ubiquitin-conjugating enzyme]-L-cysteine + N(6)-ubiquitinyl-[acceptor protein]-L-lysine.. It participates in protein modification; protein ubiquitination. In terms of biological role, E3 ubiquitin-protein ligase that regulates several biological processes through the ubiquitin-mediated proteasomal degradation of various target proteins. Ubiquitinates the caspases CASP8 and CASP10, promoting their proteasomal degradation, to negatively regulate cell death downstream of death domain receptors in the extrinsic pathway of apoptosis. May mediate 'Lys-48'-linked polyubiquitination of RIPK1 and its subsequent proteasomal degradation thereby indirectly regulating the tumor necrosis factor-mediated signaling pathway. Negatively regulates p53/TP53 through its direct ubiquitination and targeting to proteasomal degradation. Indirectly, may also negatively regulate p53/TP53 through ubiquitination and degradation of SFN. Mediates PPARGC1A proteasomal degradation probably through ubiquitination thereby indirectly regulating the metabolism of brown fat cells. Possibly involved in innate immunity, through 'Lys-48'-linked polyubiquitination of NOD1 and its subsequent proteasomal degradation. The polypeptide is E3 ubiquitin-protein ligase RNF34 (RNF34) (Pongo abelii (Sumatran orangutan)).